Consider the following 436-residue polypeptide: Transcription factor Sox-10 (436 aa).

5 disordered regions span residues 1 to 55 (MSDD…ERFP), 145 to 183 (RLRMQHKKDHPDYKYQPRRRKNGKPNPGEGDGSSEAEGG), 195 to 257 (HLDH…DFGN), 322 to 346 (PQTDSKAQVKTESSSTSHYTEQPST), and 413 to 436 (SPSVAQSHSPTHWEQPVYTTLSRP). K44 participates in a covalent cross-link: Glycyl lysine isopeptide (Lys-Gly) (interchain with G-Cter in SUMO). Positions 48 to 88 (DSEDERFPVCIREAVSQVLSGYDWTLVPMPVRVNGGSKSKP) are dimerization (DIM). The segment at residues 90–158 (VKRPMNAFMV…QHKKDHPDYK (69 aa)) is a DNA-binding region (HMG box). Residues 145-159 (RLRMQHKKDHPDYKY) are compositionally biased toward basic and acidic residues. Polar residues-rich tracts occupy residues 205–215 (SDGNSEHSAGQ) and 331–346 (KTESSSTSHYTEQPST). The interval 209 to 295 (SEHSAGQSHG…NGHAGHPSHI (87 aa)) is transactivation domain (TAM). The tract at residues 327–436 (KAQVKTESSS…QPVYTTLSRP (110 aa)) is transactivation domain (TAC). Residue K331 forms a Glycyl lysine isopeptide (Lys-Gly) (interchain with G-Cter in SUMO) linkage.

As to quaternary structure, interacts with the sumoylation factors ube2i/ubc9 and sumo1. Post-translationally, sumoylated.

The protein localises to the cytoplasm. It localises to the nucleus. Functionally, acts early in neural crest formation, functioning redundantly with the other group E Sox factors sox8 and sox9 to induce neural crest progenitors. Acts downstream of wnt-signaling at the neural plate border. Involved in the specification of neural crest progenitors fated to form the pigment cell lineage. The polypeptide is Transcription factor Sox-10 (Xenopus tropicalis (Western clawed frog)).